Here is a 264-residue protein sequence, read N- to C-terminus: Protein FAM228B (264 aa).

Belongs to the FAM228 family.

This Bos taurus (Bovine) protein is Protein FAM228B (FAM228B).